We begin with the raw amino-acid sequence, 291 residues long: MVKKSLRQFTLMATATVTLLLGSVPLYAQTADVQQKLAELERQSGGRLGVALINTADNSQILYRADERFAMCSTSKVMAAAAVLKKSESEPNLLNQRVEIKKSDLVNYNPIAEKHVNGTMSLAELSAAALQYSDNVAMNKLIAHVGGPASVTAFARQLGDETFRLDRTEPTLNTAIPGDPRDTTSPRAMAQTLRNLTLGKALGDSQRAQLVTWMKGNTTGAASIQAGLPASWVVGDKTGSGGYGTTNDIAVIWPKDRAPLILVTYFTQPQPKAESRRDVLASAAKIVTDGL.

The signal sequence occupies residues 1–28 (MVKKSLRQFTLMATATVTLLLGSVPLYA). The Nucleophile; acyl-ester intermediate role is filled by Ser-73. Residues Lys-76, Ser-133, Glu-169, and Ser-240 each coordinate a beta-lactam.

Belongs to the class-A beta-lactamase family. As to quaternary structure, monomer.

The protein localises to the secreted. It carries out the reaction a beta-lactam + H2O = a substituted beta-amino acid. With respect to regulation, inhibited by the beta-lactamase-blocking agents clavulanic acid and avibactam, via a covalent binding to Ser-73. In terms of biological role, extended-spectrum beta-lactamase (ESBL) which confers resistance to penicillins, as well as first, second, third and fourth-generation cephalosporins. Has cefotaxime- and ceftazidime-hydrolyzing activity. Inactive against the carbapenem antibiotics, imipenem, meropenem and ertapenem. The sequence is that of Beta-lactamase CTX-M-15 from Escherichia coli O25b:H4.